Here is a 93-residue protein sequence, read N- to C-terminus: Small ribosomal subunit protein uS19 (93 aa).

The protein belongs to the universal ribosomal protein uS19 family.

In terms of biological role, protein S19 forms a complex with S13 that binds strongly to the 16S ribosomal RNA. The polypeptide is Small ribosomal subunit protein uS19 (Dehalococcoides mccartyi (strain ATCC BAA-2266 / KCTC 15142 / 195) (Dehalococcoides ethenogenes (strain 195))).